A 455-amino-acid polypeptide reads, in one-letter code: Glutamyl-tRNA reductase (455 aa).

Substrate-binding positions include 49–52 (TCNR), S109, 114–116 (ETQ), and Q120. The active-site Nucleophile is C50. 189-194 (GAGKMG) is an NADP(+) binding site.

This sequence belongs to the glutamyl-tRNA reductase family. Homodimer.

The enzyme catalyses (S)-4-amino-5-oxopentanoate + tRNA(Glu) + NADP(+) = L-glutamyl-tRNA(Glu) + NADPH + H(+). Its pathway is porphyrin-containing compound metabolism; protoporphyrin-IX biosynthesis; 5-aminolevulinate from L-glutamyl-tRNA(Glu): step 1/2. In terms of biological role, catalyzes the NADPH-dependent reduction of glutamyl-tRNA(Glu) to glutamate 1-semialdehyde (GSA). This is Glutamyl-tRNA reductase from Bacillus subtilis (strain 168).